The primary structure comprises 1081 residues: Protein QUIRKY (1081 aa).

Positions 1 to 124 constitute a C2 1 domain; that stretch reads MNTTPFHSDP…SRRGEEGLVY (124 aa). 2 disordered regions span residues 154-198 and 238-323; these read DTAG…MNIP and PQHV…MEKK. Residues 163 to 176 show a composition bias toward low complexity; that stretch reads QQQQQQQQFHPPQQ. The segment covering 248–257 has biased composition (basic and acidic residues); sequence NHPHRNDNHP. Residues 258–268 are compositionally biased toward pro residues; sequence QRPPSPPPPPS. C2 domains are found at residues 318 to 440, 477 to 605, and 652 to 778; these read TTME…PQWY, SSDA…SKWH, and VCSD…TNSY. Residues E351, S352, D408, and S413 each contribute to the Ca(2+) site. A run of 3 helical transmembrane segments spans residues 879 to 899, 916 to 936, and 1024 to 1044; these read WYRI…LDNI, LVLV…VVMI, and LFIA…AKMV.

Belongs to the MCTP family. As to quaternary structure, interacts with SUB/SCM and POQ at the plasma membrane. Binds to SUB/SCM at plasmodesmata (PD) in root epidermal cells to promote tissue morphogenesis. Requires Ca(2+) as cofactor. As to expression, observed mainly in flowers, and, to a lower extent, in seedlings, roots, shoots, leaves, stems and inflorescences. Expressed in the vascular tissues of roots, cotyledons and rosette leaves. Accumulates in roots meristems.

The protein resides in the cell membrane. The protein localises to the cytoplasm. It localises to the golgi apparatus membrane. Its subcellular location is the cell junction. It is found in the plasmodesma. May be involved in Ca 2(+)-dependent signaling and membrane trafficking. Plays a role in fruit dehiscence. Components of the machinery involved in organ development mediated by the receptor-like kinase STRUBBELIG (SUB). Collaboratively with SUB and POQ, regulates cell growth anisotropy during gynoecium development, thus linking together cell-cell communication and cellular growth. Together with SUB/SCM, links RLK-dependent signal transduction and intercellular communication mediated by plasmodesmata (PD) to regulate tissue morphogenesis. May function as a signaling molecule by regulating the trafficking of other regulators. This chain is Protein QUIRKY, found in Arabidopsis thaliana (Mouse-ear cress).